The chain runs to 377 residues: tRNA-specific 2-thiouridylase MnmA (377 aa).

ATP-binding positions include 8 to 15 and Met-34; that span reads GMSGGVDS. Residues 94–96 form an interaction with target base in tRNA region; sequence NPD. The active-site Nucleophile is the Cys-99. Cys-99 and Cys-201 are disulfide-bonded. Gly-123 contributes to the ATP binding site. The interaction with tRNA stretch occupies residues 151–153; it reads KDQ. Residue Cys-201 is the Cysteine persulfide intermediate of the active site. The tract at residues 315–316 is interaction with tRNA; that stretch reads RY.

The protein belongs to the MnmA/TRMU family.

The protein resides in the cytoplasm. It catalyses the reaction S-sulfanyl-L-cysteinyl-[protein] + uridine(34) in tRNA + AH2 + ATP = 2-thiouridine(34) in tRNA + L-cysteinyl-[protein] + A + AMP + diphosphate + H(+). Catalyzes the 2-thiolation of uridine at the wobble position (U34) of tRNA, leading to the formation of s(2)U34. The protein is tRNA-specific 2-thiouridylase MnmA of Acinetobacter baumannii (strain SDF).